The chain runs to 251 residues: MAHRLQIRLLTWDVKDTLLRLRHPLGEAYATKARAHGLEVEPSALEQGFRQAYRAQSHSFPNYGLSHGLTSRQWWLDVVLQTFHLAGVQDAQAVAPIAEQLYKDFSHPCTWQVLDGAEDTLRECRTRGLRLAVISNFDRRLEGILGGLGLREHFDFVLTSEAAGWPKPDPRIFQEALRLAHMEPVVAAHVGDNYLCDYQGPRAVGMHSFLVVGPQALDPVVRDSVPKEHILPSLAHLLPALDCLEGSTPGL.

N6-acetyllysine; alternate is present on lysine 15. The residue at position 15 (lysine 15) is an N6-succinyllysine; alternate.

Belongs to the HAD-like hydrolase superfamily.

This is Haloacid dehalogenase-like hydrolase domain-containing protein 3 (HDHD3) from Homo sapiens (Human).